Consider the following 121-residue polypeptide: Putative RNase MJ0127 (121 aa).

Catalysis depends on residues R76 and H81. An RX(4)HXY motif motif is present at residues 76–83; that stretch reads RDKLIHHY. An O-di-AMP-tyrosine modification is found at Y83.

Belongs to the HepT RNase toxin family. Homodimer, probably forms a complex with cognate antitoxin MJ0128. In terms of processing, modified by cognate antitoxin MJ0128; probably at least 2 successive AMPylation events occur on Tyr-83.

In terms of biological role, probable toxic component of a putative type VII toxin-antitoxin (TA) system, probably an RNase. Probably neutralized by cognate antitoxin MJ0128. Neutralization may be due to AMPylation by MJ0128. The protein is Putative RNase MJ0127 of Methanocaldococcus jannaschii (strain ATCC 43067 / DSM 2661 / JAL-1 / JCM 10045 / NBRC 100440) (Methanococcus jannaschii).